A 1242-amino-acid chain; its full sequence is MRSRSNSGVRLDSYARLVQQHTILCHQNPVTGLLPASYDQKDAWVRDNVYSILAVWGLGLAYRKNADRDEDKAKAYELEQSVVKLMRGLLHCMIRQVDKVESFKYSQSTKDSLHAKYNTKTCATVVGDDQWGHLQLDATSVYLLFLAQMTASGLHIIHSLDEVNFIQNLVFYIEAAYKTADFGIWERGDKTNQGISELNACSVGMAKAALEALDELDLFGVKGGPQSVIHVLADEVQHCQSILNTLLPRASTSKEVDASLLSVISFPAFAVEDSKLVEITKQEIITKLQGRYGCCRFLRDGYKTPKEDPNRLYYEPAELKLFENIECEWPLFWTYFILDGIFSGNTEQVQEYREALDAVLIKGKNGVPLLPELYSVPPDRVDEEYQNPHTVDRVPMGKLPHMWGQSLYILGNLMAEGFLAPGEIDPLNRRFSTVPKPDVVVQVSILAETEEIKAILKDKGIDVETIAEVYPIRVQPARILSHIYSSLGCNSRMKLSGRPYRLMGVLGTSKLYDIRKTIYTFTPQFIDQQQFYLALDNQMIVEMLRTDLSYLCSRWRMTGQPTITFPISHTMLDEDGASLNSSILAALRKMQDGYFGGARIQTGKLSEFLTTSCCTHLSFMDPGPEGKLYSEDYDEDYDDELDSGNWMDSYDSTRNARCGDEVARYLDHLLAHTGPHPKLTPTSRKGGLDRFRAAVQTTCDLMSLVAKAKELHIQNVHMYLPTKLFQPSRPSLNLLDSPESPQDSQVPSVRVEVHLPRDQSGEVDFQSLVSQLKETSSLQEQADILYMLYTMKGPDWNTELYEEGGSTVRELLSELYVKVGEIRHWGLIRYISGILRKKVEALDEACTDLLSYQKHLTVGLPPEPREKTISAPLPYEALTKLIDEASEGDMNISTLTQEIMVYLAMYMRTQPGLFAEMFRLRIGLIIQVMATELAHSLRCSAEEATEGLMNLSPSAMRNLLHHILSGKEFGVERSVRPTDSNVSPAISIHEIGAVGATKTERTGIMQLKSEIKQVEFRRLSVSPESQTSGGHPSSIDLMSPTFLSPAACISASSGSFPTVCEPQTSKDSRQGQWQRRRRLDGALNRVPIGFYQKVWKILQKCHGLSVEGFVLPSSSTREMTPGEIKFSVHVESVLNRVPQPEYRQLLVEAILVLTMLADIEIHSIGSIIAVEKIVHIANDLFLQEKKTLGADDIMLAKDPASGICTLLYDSAPSGRFGTMTYLSKAAATYVQEFLPHSLCAVQ.

A phosphoserine mark is found at Ser-630, Ser-731, Ser-737, Ser-740, Ser-760, Ser-813, Ser-974, Ser-983, and Ser-987. The segment at Leu-812–Leu-842 is calmodulin-binding. Phosphoserine; by autocatalysis is present on Ser-1009. Ser-1020 carries the phosphoserine; by PKA modification. Phosphoserine is present on residues Ser-1022 and Ser-1025. Positions Ser-1065 to Ser-1105 are calmodulin-binding. The residue at position 1132 (Ser-1132) is a Phosphoserine. The S-farnesyl cysteine moiety is linked to residue Cys-1239.

Belongs to the phosphorylase b kinase regulatory chain family. As to quaternary structure, hexadecamer of 4 heterotetramers, each composed of alpha, beta, gamma, and delta subunits. Alpha (PHKA1 or PHKA2) and beta (PHKB) are regulatory subunits, gamma (PHKG1 or PHKG2) is the catalytic subunit, and delta is calmodulin. In terms of processing, although the final Cys may be farnesylated, the terminal tripeptide is probably not removed, and the C-terminus is not methylated.

It is found in the cell membrane. It participates in glycan biosynthesis; glycogen metabolism. With respect to regulation, by phosphorylation of various serine residues and by calcium. Its function is as follows. Phosphorylase b kinase catalyzes the phosphorylation of serine in certain substrates, including troponin I. The alpha chain may bind calmodulin. The protein is Phosphorylase b kinase regulatory subunit alpha, skeletal muscle isoform (Phka1) of Rattus norvegicus (Rat).